The primary structure comprises 460 residues: NADH-ubiquinone oxidoreductase chain 4 (460 aa).

13 helical membrane-spanning segments follow: residues Trp-22–Phe-42, Ile-59–Leu-79, Arg-94–Ala-113, Ile-117–Asn-139, Thr-148–Met-168, Phe-195–Leu-215, Ile-231–Leu-251, Met-258–Leu-278, Met-286–Thr-306, Phe-310–Leu-330, Leu-343–Leu-362, Ile-394–Met-414, and Leu-436–Trp-456.

This sequence belongs to the complex I subunit 4 family.

Its subcellular location is the mitochondrion membrane. It carries out the reaction a ubiquinone + NADH + 5 H(+)(in) = a ubiquinol + NAD(+) + 4 H(+)(out). Functionally, core subunit of the mitochondrial membrane respiratory chain NADH dehydrogenase (Complex I) that is believed to belong to the minimal assembly required for catalysis. Complex I functions in the transfer of electrons from NADH to the respiratory chain. The immediate electron acceptor for the enzyme is believed to be ubiquinone. The polypeptide is NADH-ubiquinone oxidoreductase chain 4 (MTND4) (Scyliorhinus canicula (Small-spotted catshark)).